The following is a 49-amino-acid chain: Large ribosomal subunit protein eL40 (49 aa).

It belongs to the eukaryotic ribosomal protein eL40 family.

This is Large ribosomal subunit protein eL40 from Haloquadratum walsbyi (strain DSM 16790 / HBSQ001).